Reading from the N-terminus, the 30-residue chain is Photosystem I reaction center subunit XII (30 aa).

A helical transmembrane segment spans residues 6–26 (VFTILAIALVPAVMALLLGSA).

The protein belongs to the PsaM family.

The protein localises to the cellular thylakoid membrane. This chain is Photosystem I reaction center subunit XII, found in Synechococcus sp. (strain JA-2-3B'a(2-13)) (Cyanobacteria bacterium Yellowstone B-Prime).